The chain runs to 89 residues: UPF0237 protein CE1668 (89 aa).

Positions 4-78 constitute an ACT domain; it reads IMTVTGQDHT…KEQGLVIRIQ (75 aa).

It belongs to the UPF0237 family.

The protein is UPF0237 protein CE1668 of Corynebacterium efficiens (strain DSM 44549 / YS-314 / AJ 12310 / JCM 11189 / NBRC 100395).